The chain runs to 84 residues: ATP synthase subunit c (84 aa).

2 consecutive transmembrane segments (helical) span residues 9-29 (IIGA…GFAI) and 54-74 (IVAG…LLFI).

The protein belongs to the ATPase C chain family. As to quaternary structure, F-type ATPases have 2 components, F(1) - the catalytic core - and F(0) - the membrane proton channel. F(1) has five subunits: alpha(3), beta(3), gamma(1), delta(1), epsilon(1). F(0) has three main subunits: a(1), b(2) and c(10-14). The alpha and beta chains form an alternating ring which encloses part of the gamma chain. F(1) is attached to F(0) by a central stalk formed by the gamma and epsilon chains, while a peripheral stalk is formed by the delta and b chains.

The protein localises to the cell inner membrane. Its function is as follows. F(1)F(0) ATP synthase produces ATP from ADP in the presence of a proton or sodium gradient. F-type ATPases consist of two structural domains, F(1) containing the extramembraneous catalytic core and F(0) containing the membrane proton channel, linked together by a central stalk and a peripheral stalk. During catalysis, ATP synthesis in the catalytic domain of F(1) is coupled via a rotary mechanism of the central stalk subunits to proton translocation. Functionally, key component of the F(0) channel; it plays a direct role in translocation across the membrane. A homomeric c-ring of between 10-14 subunits forms the central stalk rotor element with the F(1) delta and epsilon subunits. The sequence is that of ATP synthase subunit c from Haemophilus influenzae (strain PittEE).